Reading from the N-terminus, the 60-residue chain is Cytotoxin 4 (60 aa).

Intrachain disulfides connect C3-C21, C14-C38, C42-C53, and C54-C59.

The protein belongs to the three-finger toxin family. Short-chain subfamily. Type IA cytotoxin sub-subfamily. Monomer in solution; Homodimer and oligomer in the presence of negatively charged lipids forming a pore with a size ranging between 20 and 30 Angstroms. Expressed by the venom gland.

It is found in the secreted. Its subcellular location is the target cell membrane. Its function is as follows. Shows cytolytic activity on many different cells by forming pore in lipid membranes. In vivo, increases heart rate or kills the animal by cardiac arrest. In addition, it binds to heparin with high affinity, interacts with Kv channel-interacting protein 1 (KCNIP1) in a calcium-independent manner, and binds to integrin alpha-V/beta-3 (ITGAV/ITGB3) with moderate affinity. The sequence is that of Cytotoxin 4 from Naja mossambica (Mozambique spitting cobra).